A 669-amino-acid chain; its full sequence is Thrombospondin-type laminin G domain and EAR repeat-containing protein (669 aa).

The first 19 residues, 1-19 (MSALLSLCFVLPLAAPGHG), serve as a signal peptide directing secretion. Residues 58 to 277 (GLQLSVAAPR…RVTLGPQPPC (220 aa)) form the Laminin G-like domain. EAR repeat units follow at residues 313 to 358 (DYVE…KWTE), 360 to 408 (KFVS…KWSH), 412 to 460 (KFTP…KWNP), 464 to 506 (LFEA…VHSH), 514 to 570 (SFQL…ELNV), 574 to 622 (AFVK…RWQG), and 625 to 668 (GFVA…RLRT). Asn320 carries an N-linked (GlcNAc...) asparagine glycan. N-linked (GlcNAc...) asparagine glycosylation is found at Asn468, Asn497, Asn556, and Asn569.

The protein resides in the secreted. The protein localises to the cell surface. It localises to the cell projection. Its subcellular location is the stereocilium. Functionally, plays a critical role in tooth and hair follicle morphogenesis through regulation of the Notch signaling pathway. May play a role in development or function of the auditory system. This is Thrombospondin-type laminin G domain and EAR repeat-containing protein (TSPEAR) from Homo sapiens (Human).